We begin with the raw amino-acid sequence, 695 residues long: uncharacterized protein (695 aa).

This is an uncharacterized protein from Xanthomonas campestris pv. campestris (strain ATCC 33913 / DSM 3586 / NCPPB 528 / LMG 568 / P 25).